Consider the following 815-residue polypeptide: Protein-glutamine gamma-glutamyltransferase K (815 aa).

2 disordered regions span residues 1 to 40 (MDGP…RRGG) and 59 to 100 (DDWG…AAGD). The segment covering 16–25 (WQPPTTPSPE) has biased composition (pro residues). A Phosphothreonine modification is found at Thr21. A phosphoserine mark is found at Ser23, Ser80, Ser83, Ser90, and Ser93. Residues 59–87 (DDWGPEPHRDRGSGSGRRRPDSRGSDSRR) are compositionally biased toward basic and acidic residues. Catalysis depends on residues Cys375, His434, and Asp457. Asn497, Asp499, Glu546, and Glu551 together coordinate Ca(2+). The tract at residues 795–815 (SNAGGNSPLGETIPMASRGGA) is disordered.

This sequence belongs to the transglutaminase superfamily. Transglutaminase family. Interacts with PLAAT4. The cofactor is Ca(2+). Palmitoylated. Post-translationally, the membrane anchorage region possesses a cluster of five cysteines within which fatty acid(s) may become thioester-linked. It is subject to phorbol ester-stimulated phosphorylation and is hypersensitive to proteolysis, which releases the enzyme in a soluble form. In terms of processing, tyrosine-phosphorylated.

The protein resides in the membrane. It carries out the reaction L-glutaminyl-[protein] + L-lysyl-[protein] = [protein]-L-lysyl-N(6)-5-L-glutamyl-[protein] + NH4(+). Catalyzes the cross-linking of proteins and the conjugation of polyamines to proteins. Responsible for cross-linking epidermal proteins during formation of the stratum corneum. Involved in cell proliferation. The sequence is that of Protein-glutamine gamma-glutamyltransferase K (TGM1) from Canis lupus familiaris (Dog).